A 447-amino-acid polypeptide reads, in one-letter code: Methyl-coenzyme M reductase I subunit beta (447 aa).

Tyrosine 371 serves as a coordination point for coenzyme M. A coenzyme B-binding site is contributed by glycine 373.

This sequence belongs to the methyl-coenzyme M reductase beta subunit family. MCR is a hexamer of two alpha, two beta, and two gamma chains, forming a dimer of heterotrimers. Coenzyme F430 serves as cofactor.

Its subcellular location is the cytoplasm. The catalysed reaction is coenzyme B + methyl-coenzyme M = methane + coenzyme M-coenzyme B heterodisulfide. The protein operates within one-carbon metabolism; methyl-coenzyme M reduction; methane from methyl-coenzyme M: step 1/1. Component of the methyl-coenzyme M reductase (MCR) I that catalyzes the reductive cleavage of methyl-coenzyme M (CoM-S-CH3 or 2-(methylthio)ethanesulfonate) using coenzyme B (CoB or 7-mercaptoheptanoylthreonine phosphate) as reductant which results in the production of methane and the mixed heterodisulfide of CoB and CoM (CoM-S-S-CoB). This is the final step in methanogenesis. This Methanocaldococcus jannaschii (strain ATCC 43067 / DSM 2661 / JAL-1 / JCM 10045 / NBRC 100440) (Methanococcus jannaschii) protein is Methyl-coenzyme M reductase I subunit beta (mcrB).